Consider the following 416-residue polypeptide: Glutamyl-tRNA reductase 1 (416 aa).

Substrate is bound by residues 57–60, Ser113, 118–120, and Gln124; these read TCNR and DFE. The Nucleophile role is filled by Cys58. NADP(+) is bound at residue 193-198; the sequence is GTGKIG.

The protein belongs to the glutamyl-tRNA reductase family. Homodimer.

It carries out the reaction (S)-4-amino-5-oxopentanoate + tRNA(Glu) + NADP(+) = L-glutamyl-tRNA(Glu) + NADPH + H(+). The protein operates within porphyrin-containing compound metabolism; protoporphyrin-IX biosynthesis; 5-aminolevulinate from L-glutamyl-tRNA(Glu): step 1/2. Catalyzes the NADPH-dependent reduction of glutamyl-tRNA(Glu) to glutamate 1-semialdehyde (GSA). The chain is Glutamyl-tRNA reductase 1 from Flavobacterium johnsoniae (strain ATCC 17061 / DSM 2064 / JCM 8514 / BCRC 14874 / CCUG 350202 / NBRC 14942 / NCIMB 11054 / UW101) (Cytophaga johnsonae).